Consider the following 185-residue polypeptide: Potassium-transporting ATPase KdpC subunit (185 aa).

The chain crosses the membrane as a helical span at residues Leu8–Ala28. The disordered stretch occupies residues Gly113–Ile132. The segment covering Gln114–Ser126 has biased composition (polar residues).

It belongs to the KdpC family. As to quaternary structure, the system is composed of three essential subunits: KdpA, KdpB and KdpC.

It is found in the cell membrane. Part of the high-affinity ATP-driven potassium transport (or Kdp) system, which catalyzes the hydrolysis of ATP coupled with the electrogenic transport of potassium into the cytoplasm. This subunit acts as a catalytic chaperone that increases the ATP-binding affinity of the ATP-hydrolyzing subunit KdpB by the formation of a transient KdpB/KdpC/ATP ternary complex. The polypeptide is Potassium-transporting ATPase KdpC subunit (Staphylococcus haemolyticus (strain JCSC1435)).